The primary structure comprises 401 residues: Imidazolonepropionase (401 aa).

The Fe(3+) site is built by His66 and His68. 2 residues coordinate Zn(2+): His66 and His68. Arg75, Tyr138, and His171 together coordinate 4-imidazolone-5-propanoate. Tyr138 contacts N-formimidoyl-L-glutamate. Residue His236 participates in Fe(3+) binding. Residue His236 participates in Zn(2+) binding. Residue Gln239 coordinates 4-imidazolone-5-propanoate. Residue Asp311 participates in Fe(3+) binding. Asp311 lines the Zn(2+) pocket. N-formimidoyl-L-glutamate is bound by residues Asn313 and Gly315. Thr316 provides a ligand contact to 4-imidazolone-5-propanoate.

The protein belongs to the metallo-dependent hydrolases superfamily. HutI family. The cofactor is Zn(2+). Fe(3+) is required as a cofactor.

Its subcellular location is the cytoplasm. It carries out the reaction 4-imidazolone-5-propanoate + H2O = N-formimidoyl-L-glutamate. It functions in the pathway amino-acid degradation; L-histidine degradation into L-glutamate; N-formimidoyl-L-glutamate from L-histidine: step 3/3. Its function is as follows. Catalyzes the hydrolytic cleavage of the carbon-nitrogen bond in imidazolone-5-propanoate to yield N-formimidoyl-L-glutamate. It is the third step in the universal histidine degradation pathway. This Pseudomonas syringae pv. tomato (strain ATCC BAA-871 / DC3000) protein is Imidazolonepropionase.